Reading from the N-terminus, the 240-residue chain is Protein UL136 (240 aa).

A helical transmembrane segment spans residues 69–89 (VICAVLLTLMIMAIGALIAYL). 2 disordered regions span residues 119 to 142 (ERQRRRRRAMDVPDPELGDPARRP) and 164 to 199 (TRPAPPALSSPETGDDSNDDAVAGGGAGGVTSPATR).

This sequence belongs to the HHV-5 UL136 protein family. In terms of assembly, interacts with host ATP1B1.

The protein resides in the host membrane. The chain is Protein UL136 (UL136) from Human cytomegalovirus (strain Towne) (HHV-5).